The primary structure comprises 337 residues: ATP-dependent 6-phosphofructokinase (337 aa).

An ATP-binding site is contributed by Gly11. 21–25 (RAVVR) lines the ADP pocket. ATP-binding positions include 72-73 (RY) and 102-105 (GDGS). A Mg(2+)-binding site is contributed by Asp103. 125 to 127 (TID) serves as a coordination point for substrate. Asp127 functions as the Proton acceptor in the catalytic mechanism. ADP is bound at residue Arg154. Substrate contacts are provided by residues Arg162 and 169–171 (MGR). ADP-binding positions include 185 to 187 (GAD), Lys212, and 214 to 216 (KNH). Residues Glu223, Arg245, and 251–254 (HILR) each bind substrate.

This sequence belongs to the phosphofructokinase type A (PFKA) family. ATP-dependent PFK group I subfamily. Prokaryotic clade 'B1' sub-subfamily. Homotetramer. Requires Mg(2+) as cofactor.

It localises to the cytoplasm. It catalyses the reaction beta-D-fructose 6-phosphate + ATP = beta-D-fructose 1,6-bisphosphate + ADP + H(+). It functions in the pathway carbohydrate degradation; glycolysis; D-glyceraldehyde 3-phosphate and glycerone phosphate from D-glucose: step 3/4. With respect to regulation, allosterically activated by ADP and other diphosphonucleosides, and allosterically inhibited by phosphoenolpyruvate. In terms of biological role, catalyzes the phosphorylation of D-fructose 6-phosphate to fructose 1,6-bisphosphate by ATP, the first committing step of glycolysis. This Streptococcus pyogenes serotype M4 (strain MGAS10750) protein is ATP-dependent 6-phosphofructokinase.